Reading from the N-terminus, the 820-residue chain is DNA mismatch repair protein MutS (820 aa).

Residue 615 to 622 (GPNMAGKS) participates in ATP binding.

The protein belongs to the DNA mismatch repair MutS family.

Functionally, this protein is involved in the repair of mismatches in DNA. It is possible that it carries out the mismatch recognition step. This protein has a weak ATPase activity. This chain is DNA mismatch repair protein MutS, found in Anaplasma phagocytophilum (strain HZ).